The sequence spans 158 residues: MDIQIIDETKIVPEAQIKLVEDVLEFAGQKLELAEDTEMSVTFVTNERIRQINQEYRNTDRATDVISFAIEEDPEEEGLPANFEELFDIPKNIGDLFVSLEKAAEQAETYGHSFERELGYTMVHGFLHLNGYDHIHTEDEVKMIPLQETILDEFGLKR.

Residues H124, H128, and H134 each contribute to the Zn(2+) site.

The protein belongs to the endoribonuclease YbeY family. It depends on Zn(2+) as a cofactor.

It localises to the cytoplasm. Single strand-specific metallo-endoribonuclease involved in late-stage 70S ribosome quality control and in maturation of the 3' terminus of the 16S rRNA. This Latilactobacillus sakei subsp. sakei (strain 23K) (Lactobacillus sakei subsp. sakei) protein is Endoribonuclease YbeY.